A 588-amino-acid polypeptide reads, in one-letter code: Tannase (588 aa).

An N-terminal signal peptide occupies residues 1–18 (MRQHSRMAVAALAAGANA). Disulfide bonds link Cys-25/Cys-71, Cys-194/Cys-502, and Cys-261/Cys-278. The active-site Acyl-ester intermediate is Ser-195. Ca(2+) is bound by residues Asp-262, Asp-265, Asp-269, and Val-271. Gln-317 carries the pyrrolidone carboxylic acid modification. Residues Asp-455 and His-501 each act as charge relay system in the active site.

The protein belongs to the tannase family. Heterooctamer of 4 33 kDa and 4 30 kDa subunits linked by disulfide bond(s). Post-translationally, the protein is glycosylated to a carbohydrate content of 22.7%. The N-terminus of the 30 kDa subunit is blocked.

The catalysed reaction is digallate + H2O = 2 3,4,5-trihydroxybenzoate + H(+). Hydrolyzes ester bonds of tannic acid to produce gallic acid and glucose. The sequence is that of Tannase from Aspergillus oryzae (strain ATCC 42149 / RIB 40) (Yellow koji mold).